A 76-amino-acid chain; its full sequence is Large ribosomal subunit protein uL29 (76 aa).

Belongs to the universal ribosomal protein uL29 family.

This Corynebacterium efficiens (strain DSM 44549 / YS-314 / AJ 12310 / JCM 11189 / NBRC 100395) protein is Large ribosomal subunit protein uL29.